The primary structure comprises 429 residues: 26S proteasome regulatory subunit RPN7 (429 aa).

Phosphoserine occurs at positions 8 and 77. The TPR repeat unit spans residues 131-164 (AQAWINLGEYYAQIGDKDNAEKTLGKSLSKAIST). The 173-residue stretch at 223–395 (NFKEAAKLLV…GIVETNRPDN (173 aa)) folds into the PCI domain.

As to quaternary structure, the 26S proteasome is composed of a core protease, known as the 20S proteasome, capped at one or both ends by the 19S regulatory complex (RC). The RC is composed of at least 18 different subunits in two subcomplexes, the base and the lid, which form the portions proximal and distal to the 20S proteolytic core, respectively. Component of the lid subcomplex of the 19S RC.

The protein localises to the nucleus. Functionally, component of the 19S cap proteasome complex which acts as a regulatory subunit of the 26S proteasome, involved in the ATP-dependent degradation of ubiquitinated proteins. This Saccharomyces cerevisiae (strain ATCC 204508 / S288c) (Baker's yeast) protein is 26S proteasome regulatory subunit RPN7.